Here is a 98-residue protein sequence, read N- to C-terminus: NADH-ubiquinone oxidoreductase chain 4L (98 aa).

The next 3 helical transmembrane spans lie at 1–21, 29–49, and 61–81; these read MSIT…GLLL, SLLC…MIIL, and IILL…LVMV.

Belongs to the complex I subunit 4L family. In terms of assembly, core subunit of respiratory chain NADH dehydrogenase (Complex I) which is composed of 45 different subunits.

The protein resides in the mitochondrion inner membrane. It catalyses the reaction a ubiquinone + NADH + 5 H(+)(in) = a ubiquinol + NAD(+) + 4 H(+)(out). Core subunit of the mitochondrial membrane respiratory chain NADH dehydrogenase (Complex I) which catalyzes electron transfer from NADH through the respiratory chain, using ubiquinone as an electron acceptor. Part of the enzyme membrane arm which is embedded in the lipid bilayer and involved in proton translocation. This chain is NADH-ubiquinone oxidoreductase chain 4L (MT-ND4L), found in Platyrrhinus dorsalis (Thomas's broad-nosed bat).